We begin with the raw amino-acid sequence, 360 residues long: 1-aminocyclopropane-1-carboxylate oxidase homolog 6 (360 aa).

Residues 208–309 (KGLLLLCHYY…ISVASFFSTS (102 aa)) enclose the Fe2OG dioxygenase domain. Residues H232, D234, and H288 each contribute to the Fe cation site. 2-oxoglutarate is bound at residue R299.

Belongs to the iron/ascorbate-dependent oxidoreductase family. Fe(2+) is required as a cofactor. Constitutively expressed in leaves and blades.

The polypeptide is 1-aminocyclopropane-1-carboxylate oxidase homolog 6 (Arabidopsis thaliana (Mouse-ear cress)).